The chain runs to 142 residues: Alpha-lactalbumin (142 aa).

A signal peptide spans 1–19 (MMSFVSLLLVGILFHATQA). Residues 20 to 142 (EQLTKCEVFR…KLDQWLCEKL (123 aa)) enclose the C-type lysozyme domain. 4 cysteine pairs are disulfide-bonded: Cys25/Cys139, Cys47/Cys130, Cys80/Cys96, and Cys92/Cys110. Asn64 is a glycosylation site (N-linked (GlcNAc...) asparagine). Ca(2+)-binding residues include Lys98, Asp101, Asp103, Asp106, and Asp107.

It belongs to the glycosyl hydrolase 22 family. Lactose synthase (LS) is a heterodimer of a catalytic component, beta1,4-galactosyltransferase (beta4Gal-T1) and a regulatory component, alpha-lactalbumin (LA). Mammary gland specific. Secreted in milk.

It is found in the secreted. Its function is as follows. Regulatory subunit of lactose synthase, changes the substrate specificity of galactosyltransferase in the mammary gland making glucose a good acceptor substrate for this enzyme. This enables LS to synthesize lactose, the major carbohydrate component of milk. In other tissues, galactosyltransferase transfers galactose onto the N-acetylglucosamine of the oligosaccharide chains in glycoproteins. The sequence is that of Alpha-lactalbumin (LALBA) from Bos taurus (Bovine).